A 185-amino-acid polypeptide reads, in one-letter code: GTP-dependent dephospho-CoA kinase (185 aa).

Positions 50, 52, 73, 75, and 128 each coordinate GTP.

Belongs to the GTP-dependent DPCK family.

It carries out the reaction 3'-dephospho-CoA + GTP = GDP + CoA + H(+). It participates in cofactor biosynthesis; coenzyme A biosynthesis. Functionally, catalyzes the GTP-dependent phosphorylation of the 3'-hydroxyl group of dephosphocoenzyme A to form coenzyme A (CoA). The protein is GTP-dependent dephospho-CoA kinase of Aeropyrum pernix (strain ATCC 700893 / DSM 11879 / JCM 9820 / NBRC 100138 / K1).